A 150-amino-acid polypeptide reads, in one-letter code: Urease accessory protein UreE (150 aa).

This sequence belongs to the UreE family.

The protein resides in the cytoplasm. Involved in urease metallocenter assembly. Binds nickel. Probably functions as a nickel donor during metallocenter assembly. The sequence is that of Urease accessory protein UreE from Staphylococcus aureus (strain Mu3 / ATCC 700698).